The sequence spans 478 residues: DNA gyrase subunit B (478 aa).

The Toprim domain occupies 319–438; that stretch reads CEIYLVEGDS…GGHVYIAQPP (120 aa). 3 residues coordinate Mg(2+): Glu-325, Asp-403, and Asp-405.

This sequence belongs to the type II topoisomerase GyrB family. Heterotetramer, composed of two GyrA and two GyrB chains. In the heterotetramer, GyrA contains the active site tyrosine that forms a transient covalent intermediate with DNA, while GyrB binds cofactors and catalyzes ATP hydrolysis. Requires Mg(2+) as cofactor. Mn(2+) serves as cofactor. It depends on Ca(2+) as a cofactor.

It is found in the cytoplasm. It catalyses the reaction ATP-dependent breakage, passage and rejoining of double-stranded DNA.. In terms of biological role, a type II topoisomerase that negatively supercoils closed circular double-stranded (ds) DNA in an ATP-dependent manner to modulate DNA topology and maintain chromosomes in an underwound state. Negative supercoiling favors strand separation, and DNA replication, transcription, recombination and repair, all of which involve strand separation. Also able to catalyze the interconversion of other topological isomers of dsDNA rings, including catenanes and knotted rings. Type II topoisomerases break and join 2 DNA strands simultaneously in an ATP-dependent manner. The chain is DNA gyrase subunit B (gyrB) from Cytophaga aurantiaca.